Here is a 322-residue protein sequence, read N- to C-terminus: Ribosomal lysine N-methyltransferase 5 (322 aa).

S-adenosyl-L-methionine contacts are provided by residues W92, 141–143 (GTG), D163, W214, and M242.

This sequence belongs to the class I-like SAM-binding methyltransferase superfamily. RKM5 family.

Functionally, S-adenosyl-L-methionine-dependent protein-lysine N-methyltransferase that methylates 60S ribosomal protein L1. The chain is Ribosomal lysine N-methyltransferase 5 (RKM5) from Kluyveromyces lactis (strain ATCC 8585 / CBS 2359 / DSM 70799 / NBRC 1267 / NRRL Y-1140 / WM37) (Yeast).